Consider the following 225-residue polypeptide: Germin-like protein 3-1 (225 aa).

The signal sequence occupies residues 1-22; sequence MRAAVAHRILLSLALFAVLCRC. An intrachain disulfide couples cysteine 31 to cysteine 51. The region spanning 65–216 is the Cupin type-1 domain; sequence SALSRATNPA…AFKITGQDVQ (152 aa). Asparagine 81 carries N-linked (GlcNAc...) asparagine glycosylation. Residues histidine 115, histidine 117, glutamate 122, and histidine 161 each contribute to the Mn(2+) site.

This sequence belongs to the germin family. Oligomer (believed to be a pentamer but probably hexamer).

The protein resides in the secreted. It localises to the extracellular space. Its subcellular location is the apoplast. May play a role in plant defense. Probably has no oxalate oxidase activity even if the active site is conserved. This Oryza sativa subsp. japonica (Rice) protein is Germin-like protein 3-1.